The primary structure comprises 152 residues: Pertussis toxin subunit 4 (152 aa).

The N-terminal stretch at 1-42 is a signal peptide; sequence MLRRFPTRTTAPGQGGARRSRVRALAWLLASGAMTHLSPALA. 2 disulfides stabilise this stretch: Cys73-Cys93 and Cys145-Cys151.

Pertussis toxin contains five different chains, S1-S5. They are organized into 2 functional subunits: A, composed of S1 (which is toxic) and B, containing S2, S3, S5, and two copies of S4 (B binds to the membrane receptors). Dimers of S2-S4 and S3-S4 are held together by S5.

It localises to the secreted. Its subcellular location is the host cell membrane. In terms of biological role, PTX oligomer B binds to receptors on the eukaryotic cell surface and facilitates the translocation of the toxic subunit across the cell membrane. In Bordetella parapertussis (strain 12822 / ATCC BAA-587 / NCTC 13253), this protein is Pertussis toxin subunit 4 (ptxD).